Reading from the N-terminus, the 564-residue chain is O-fucosyltransferase 6 (564 aa).

Residues 17–37 form a helical; Signal-anchor for type II membrane protein membrane-spanning segment; sequence LLPFICAVSGALLILFALLSI. Residues Asn95 and Asn139 are each glycosylated (N-linked (GlcNAc...) asparagine). 277-279 provides a ligand contact to substrate; that stretch reads HLR. An N-linked (GlcNAc...) asparagine glycan is attached at Asn449. Residues 501-512 are compositionally biased toward basic and acidic residues; sequence MDSRKFGKKEQK. The segment at 501–542 is disordered; that stretch reads MDSRKFGKKEQKEDEDAELSSSETDYEEDQTDLQDRGLYNGT. Positions 513-532 are enriched in acidic residues; the sequence is EDEDAELSSSETDYEEDQTD. The N-linked (GlcNAc...) asparagine glycan is linked to Asn540.

Belongs to the glycosyltransferase GT106 family.

It localises to the membrane. It functions in the pathway glycan metabolism. This Arabidopsis thaliana (Mouse-ear cress) protein is O-fucosyltransferase 6.